Consider the following 379-residue polypeptide: Dual-specificity RNA methyltransferase RlmN (379 aa).

Glutamate 96 acts as the Proton acceptor in catalysis. One can recognise a Radical SAM core domain in the interval 102–342 (TDDRGTLCVS…TRTTRGDDID (241 aa)). A disulfide bridge connects residues cysteine 109 and cysteine 345. [4Fe-4S] cluster contacts are provided by cysteine 116, cysteine 120, and cysteine 123. Residues 170 to 171 (GE), serine 202, 224 to 226 (SLH), and asparagine 302 each bind S-adenosyl-L-methionine. Cysteine 345 (S-methylcysteine intermediate) is an active-site residue.

This sequence belongs to the radical SAM superfamily. RlmN family. It depends on [4Fe-4S] cluster as a cofactor.

The protein localises to the cytoplasm. The enzyme catalyses adenosine(2503) in 23S rRNA + 2 reduced [2Fe-2S]-[ferredoxin] + 2 S-adenosyl-L-methionine = 2-methyladenosine(2503) in 23S rRNA + 5'-deoxyadenosine + L-methionine + 2 oxidized [2Fe-2S]-[ferredoxin] + S-adenosyl-L-homocysteine. It carries out the reaction adenosine(37) in tRNA + 2 reduced [2Fe-2S]-[ferredoxin] + 2 S-adenosyl-L-methionine = 2-methyladenosine(37) in tRNA + 5'-deoxyadenosine + L-methionine + 2 oxidized [2Fe-2S]-[ferredoxin] + S-adenosyl-L-homocysteine. In terms of biological role, specifically methylates position 2 of adenine 2503 in 23S rRNA and position 2 of adenine 37 in tRNAs. m2A2503 modification seems to play a crucial role in the proofreading step occurring at the peptidyl transferase center and thus would serve to optimize ribosomal fidelity. This chain is Dual-specificity RNA methyltransferase RlmN, found in Pseudomonas entomophila (strain L48).